The primary structure comprises 215 residues: Protein Thf1 (215 aa).

A coiled-coil region spans residues 182 to 213 (ERMDQAVELVEETIAAEKRKKERRLEEQAQRT).

It belongs to the THF1 family.

Its function is as follows. May be involved in photosynthetic membrane biogenesis. This Synechococcus sp. (strain CC9605) protein is Protein Thf1.